Here is a 583-residue protein sequence, read N- to C-terminus: Protein translocase subunit SecD (583 aa).

6 helical membrane-spanning segments follow: residues 7-27, 419-439, 446-468, 469-489, 511-531, and 538-558; these read FGVV…TLQW, LVWG…EAGV, LLNL…LSSI, AGMI…FERI, FWAI…LSVL, and GFAY…LFVS.

It belongs to the SecD/SecF family. SecD subfamily. As to quaternary structure, forms a complex with SecF. Part of the essential Sec protein translocation apparatus which comprises SecA, SecYEG and auxiliary proteins SecDF. Other proteins may also be involved.

It is found in the cell inner membrane. In terms of biological role, part of the Sec protein translocase complex. Interacts with the SecYEG preprotein conducting channel. SecDF uses the proton motive force (PMF) to complete protein translocation after the ATP-dependent function of SecA. The chain is Protein translocase subunit SecD from Treponema pallidum (strain Nichols).